Here is a 120-residue protein sequence, read N- to C-terminus: Large ribosomal subunit protein uL18 (120 aa).

The protein belongs to the universal ribosomal protein uL18 family. In terms of assembly, part of the 50S ribosomal subunit; part of the 5S rRNA/L5/L18/L25 subcomplex. Contacts the 5S and 23S rRNAs.

This is one of the proteins that bind and probably mediate the attachment of the 5S RNA into the large ribosomal subunit, where it forms part of the central protuberance. This chain is Large ribosomal subunit protein uL18, found in Rhodospirillum rubrum (strain ATCC 11170 / ATH 1.1.1 / DSM 467 / LMG 4362 / NCIMB 8255 / S1).